Here is a 916-residue protein sequence, read N- to C-terminus: Translation initiation factor IF-2 (916 aa).

Residues 50 to 326 are disordered; sequence NRDKESTSQP…NSTLQQGFNK (277 aa). Residues 109–241 show a composition bias toward basic and acidic residues; the sequence is AQREAEEKAR…LAEENAEKWT (133 aa). A compositionally biased stretch (basic residues) spans 277-291; sequence GRGRAAKAPRPKKNN. Residues 292 to 304 show a composition bias toward basic and acidic residues; sequence RHSEKADREEARA. The region spanning 415 to 584 is the tr-type G domain; the sequence is SRAPVVTIMG…LLQAEVLELK (170 aa). The tract at residues 424-431 is G1; that stretch reads GHVDHGKT. 424-431 contacts GTP; sequence GHVDHGKT. Positions 449-453 are G2; that stretch reads GITQH. The tract at residues 470 to 473 is G3; the sequence is DTPG. GTP contacts are provided by residues 470–474 and 524–527; these read DTPGH and NKID. Residues 524–527 are G4; the sequence is NKID. Positions 560–562 are G5; sequence SAK.

This sequence belongs to the TRAFAC class translation factor GTPase superfamily. Classic translation factor GTPase family. IF-2 subfamily.

The protein resides in the cytoplasm. Functionally, one of the essential components for the initiation of protein synthesis. Protects formylmethionyl-tRNA from spontaneous hydrolysis and promotes its binding to the 30S ribosomal subunits. Also involved in the hydrolysis of GTP during the formation of the 70S ribosomal complex. The protein is Translation initiation factor IF-2 of Proteus mirabilis (strain HI4320).